A 47-amino-acid chain; its full sequence is Short neurotoxin D2A (47 aa).

2 disulfides stabilise this stretch: cysteine 3-cysteine 24 and cysteine 17-cysteine 39.

In terms of tissue distribution, expressed by the venom gland.

The protein resides in the secreted. This Micrurus pyrrhocryptus (Coral snake) protein is Short neurotoxin D2A.